The following is a 416-amino-acid chain: Formyl-CoA:oxalate CoA-transferase (416 aa).

CoA-binding positions include 17-18 (QS), Arg-38, 72-75 (LNTK), 96-98 (NFH), His-104, and 137-140 (KAYE). The active-site Nucleophile is Asp-169. 248–250 (GGQ) contributes to the substrate binding site. 273–275 (QEQ) lines the CoA pocket.

It belongs to the CoA-transferase III family. Frc subfamily. In terms of assembly, homodimer.

It carries out the reaction formyl-CoA + oxalate = oxalyl-CoA + formate. Its pathway is metabolic intermediate degradation; oxalate degradation; CO(2) and formate from oxalate: step 1/2. Functionally, involved in the catabolism of oxalate and in the adapatation to low pH via the induction of the oxalate-dependent acid tolerance response (ATR). Catalyzes the transfer of the CoA moiety from formyl-CoA to oxalate. The polypeptide is Formyl-CoA:oxalate CoA-transferase (Shigella sonnei (strain Ss046)).